The primary structure comprises 359 residues: Photosystem II protein D1 1 (359 aa).

A run of 3 helical transmembrane segments spans residues Tyr29–Thr46, His118–Leu133, and Trp142–Ala156. His118 contributes to the chlorophyll a binding site. Tyr126 contacts pheophytin a. Positions 170 and 189 each coordinate [CaMn4O5] cluster. A helical membrane pass occupies residues Phe197–Leu218. His198 is a chlorophyll a binding site. Residues His215 and Ser264 to Phe265 each bind a quinone. His215 lines the Fe cation pocket. Fe cation is bound at residue His272. The chain crosses the membrane as a helical span at residues Phe274–Leu288. Positions 332, 333, 342, and 344 each coordinate [CaMn4O5] cluster. Residues Ala345 to Gly359 constitute a propeptide that is removed on maturation.

The protein belongs to the reaction center PufL/M/PsbA/D family. As to quaternary structure, PSII is composed of 1 copy each of membrane proteins PsbA, PsbB, PsbC, PsbD, PsbE, PsbF, PsbH, PsbI, PsbJ, PsbK, PsbL, PsbM, PsbT, PsbX, PsbY, PsbZ, Psb30/Ycf12, peripheral proteins PsbO, CyanoQ (PsbQ), PsbU, PsbV and a large number of cofactors. It forms dimeric complexes. The D1/D2 heterodimer binds P680, chlorophylls that are the primary electron donor of PSII, and subsequent electron acceptors. It shares a non-heme iron and each subunit binds pheophytin, quinone, additional chlorophylls, carotenoids and lipids. D1 provides most of the ligands for the Mn4-Ca-O5 cluster of the oxygen-evolving complex (OEC). There is also a Cl(-1) ion associated with D1 and D2, which is required for oxygen evolution. The PSII complex binds additional chlorophylls, carotenoids and specific lipids. is required as a cofactor. Post-translationally, tyr-161 forms a radical intermediate that is referred to as redox-active TyrZ, YZ or Y-Z. C-terminally processed by CtpA; processing is essential to allow assembly of the oxygen-evolving complex and thus photosynthetic growth.

It localises to the cellular thylakoid membrane. It catalyses the reaction 2 a plastoquinone + 4 hnu + 2 H2O = 2 a plastoquinol + O2. Photosystem II (PSII) is a light-driven water:plastoquinone oxidoreductase that uses light energy to abstract electrons from H(2)O, generating O(2) and a proton gradient subsequently used for ATP formation. It consists of a core antenna complex that captures photons, and an electron transfer chain that converts photonic excitation into a charge separation. The D1/D2 (PsbA/PsbD) reaction center heterodimer binds P680, the primary electron donor of PSII as well as several subsequent electron acceptors. This chain is Photosystem II protein D1 1, found in Synechococcus sp. (strain RCC307).